The primary structure comprises 367 residues: 3-dehydroquinate synthase (367 aa).

NAD(+) is bound by residues 108-112, 132-133, Lys145, and Lys154; these read GVIGD and TT. The Zn(2+) site is built by Glu187, His249, and His267.

This sequence belongs to the sugar phosphate cyclases superfamily. Dehydroquinate synthase family. It depends on Co(2+) as a cofactor. Zn(2+) is required as a cofactor. Requires NAD(+) as cofactor.

Its subcellular location is the cytoplasm. The catalysed reaction is 7-phospho-2-dehydro-3-deoxy-D-arabino-heptonate = 3-dehydroquinate + phosphate. It participates in metabolic intermediate biosynthesis; chorismate biosynthesis; chorismate from D-erythrose 4-phosphate and phosphoenolpyruvate: step 2/7. Functionally, catalyzes the conversion of 3-deoxy-D-arabino-heptulosonate 7-phosphate (DAHP) to dehydroquinate (DHQ). The chain is 3-dehydroquinate synthase from Paracoccus denitrificans (strain Pd 1222).